The chain runs to 343 residues: MSENEGWCTIESDPGVFTELITKIGVKDIQVEELYTLDSSEYDRLKPVLGLIFLFKWEKEEENRTISDNENIFFANQVIQNACATQAILSVLLNSEGIELGEELSNFKSFVGDFPPMMKGEAIGNSELIKETHNSFTVQDPFIFSKKKNRKPSDAFHFISFIPFQGKVYELDGLKKGPYCLGDCTPDNWLEIATPFIQKRMEKYSQGEIRFNLMAVIKNRQTTLQEKILTLEKKKNDLEIKLSELNSGSGGDNKEESGGATPTTKEDLNFMINVVNNDIEEANNEILMEQEKFRNWKDENIRRKHNFTPLILNLIKGLAEKDNLQPLIQKAKDQISQKQQQHK.

In terms of domain architecture, UCH catalytic spans 6-218 (GWCTIESDPG…IRFNLMAVIK (213 aa)). Residue Cys83 is the Nucleophile of the active site. Catalysis depends on His157, which acts as the Proton donor. Residues 242–266 (LSELNSGSGGDNKEESGGATPTTKE) are disordered. Residues 306 to 334 (NFTPLILNLIKGLAEKDNLQPLIQKAKDQ) enclose the ULD domain.

The protein belongs to the peptidase C12 family. In terms of assembly, component of the 19S (PA700) regulatory complex of the 26S proteasome.

Its subcellular location is the cytoplasm. It localises to the nucleus. It catalyses the reaction Thiol-dependent hydrolysis of ester, thioester, amide, peptide and isopeptide bonds formed by the C-terminal Gly of ubiquitin (a 76-residue protein attached to proteins as an intracellular targeting signal).. Protease that specifically cleaves 'Lys-48'-linked polyubiquitin chains. Deubiquitinating enzyme associated with the 19S regulatory subunit of the 26S proteasome. The polypeptide is Ubiquitin carboxyl-terminal hydrolase isozyme L5 (uch2) (Dictyostelium discoideum (Social amoeba)).